Here is a 1318-residue protein sequence, read N- to C-terminus: Major tegument protein (1318 aa).

This sequence belongs to the herpesviridae MTP family. As to quaternary structure, interacts with host DAXX; this interaction disrupts the chromatin remodeling complex ATRX:DAXX and thus allows viral transcription. Interacts with host SMC6; this interaction targets SMC5-SMC6 complex for proteasomal degradation.

The protein localises to the virion tegument. Its subcellular location is the host nucleus. Tegument protein that plays a role in the inhibition of host intrinsic defenses to promote viral early gene activation. Interacts with host DAXX and thereby disrupts the complex between DAXX and ATRX. Suppresses the DAXX-ATRX dependent deposition of histone H3.3 on viral chromatin allowing viral transcription. Targets also host SMC5/6 for proteasomal degradation in a CUL7 and calpain-dependent manner to support nuclear membrane-less replication compartment formation and lytic virus replication. In Homo sapiens (Human), this protein is Major tegument protein.